Reading from the N-terminus, the 249-residue chain is MADKKEVIQNWPLETGDYAVGNVESPVAVVSLGSNMNDELVAAGAAISGPLHTENLGIEKVVANIISNSNIRYVLICGSEVQGHITGKTVEALYENGIDEEKKSIIGSPGAIPFVENLPVEAVERFQKQVSIVSMINNEDVSEISSKIDECISNDPGAYDEDAMIVEFNETPEEEFEVDEVTFSDDSAVDLASIVLLEVENRISMMNNEIKQIASLEKISSGYYAGKIEGIVIGFILTLVFLIIIIQGL.

Residues Met1–Lys227 lie on the Cytoplasmic side of the membrane. His84 contributes to the 5-hydroxybenzimidazolylcob(I)amide binding site. A helical transmembrane segment spans residues Ile228–Gly248. Leu249 is a topological domain (extracellular).

This sequence belongs to the MtrA family. The complex is composed of 8 subunits; MtrA, MtrB, MtrC, MtrD, MtrE, MtrF, MtrG and MtrH. 5-hydroxybenzimidazolylcob(I)amide is required as a cofactor.

Its subcellular location is the cell membrane. The catalysed reaction is 5-methyl-5,6,7,8-tetrahydromethanopterin + coenzyme M + 2 Na(+)(in) = 5,6,7,8-tetrahydromethanopterin + methyl-coenzyme M + 2 Na(+)(out). Its pathway is one-carbon metabolism; methanogenesis from CO(2); methyl-coenzyme M from 5,10-methylene-5,6,7,8-tetrahydromethanopterin: step 2/2. In terms of biological role, part of a complex that catalyzes the formation of methyl-coenzyme M and tetrahydromethanopterin from coenzyme M and methyl-tetrahydromethanopterin. This is an energy-conserving, sodium-ion translocating step. The chain is Tetrahydromethanopterin S-methyltransferase subunit A from Methanosphaera stadtmanae (strain ATCC 43021 / DSM 3091 / JCM 11832 / MCB-3).